Reading from the N-terminus, the 288-residue chain is Probable syndecan (288 aa).

Residues 1–26 (MILKLNFCLSTYSVLILLSLSTQAFA) form the signal peptide. Over 27-231 (ANQAKTKVVP…ETLANGFYAA (205 aa)) the chain is Extracellular. Positions 67-175 (EVNGSGYPTD…NIHNDEDFFT (109 aa)) are disordered. A glycan (N-linked (GlcNAc...) asparagine) is linked at N69. O-linked (Xyl...) (glycosaminoglycan) serine glycosylation is found at S71 and S86. The segment covering 89 to 104 (PPSSATTKSDKVTSPS) has biased composition (polar residues). The segment covering 106–124 (AVVTAKPTTVPTTTASFKP) has biased composition (low complexity). The span at 141–164 (VEEDEDDDEDEDEDDEDDEEDFAD) shows a compositional bias: acidic residues. S214 carries an O-linked (Xyl...) (glycosaminoglycan) serine glycan. Residues 232–252 (IAGGVLVAVITAILLVLFVVF) form a helical membrane-spanning segment. Topologically, residues 253-288 (RIRKKDEGSYALDEPKQARPYASYGYTKASTKEFYA) are cytoplasmic.

It belongs to the syndecan proteoglycan family.

The protein localises to the membrane. It localises to the cell surface. It is found in the cell junction. Its subcellular location is the cytoplasm. Functionally, cell surface proteoglycan that bears heparan sulfate. Required for correct mitotic spindle orientation of the ABar blastomere division plane and this may be through modulation of astral microtubule array, and in association with the wnt-signaling proteins mig-5 and dsh-2. Involved in the migration of AQR and PQR neurons, which descend from the Q neuroblasts. Promotes the axon guidance of D-type motor neurons. In Caenorhabditis elegans, this protein is Probable syndecan.